Here is a 161-residue protein sequence, read N- to C-terminus: Ribosome maturation factor RimP (161 aa).

This sequence belongs to the RimP family.

It is found in the cytoplasm. In terms of biological role, required for maturation of 30S ribosomal subunits. The protein is Ribosome maturation factor RimP of Rickettsia typhi (strain ATCC VR-144 / Wilmington).